A 445-amino-acid polypeptide reads, in one-letter code: DNA polymerase IV (445 aa).

The 181-residue stretch at Leu-49–Gly-229 folds into the UmuC domain. 2 residues coordinate Mg(2+): Asp-53 and Asp-146. Glu-147 is an active-site residue.

The protein belongs to the DNA polymerase type-Y family. In terms of assembly, monomer. Requires Mg(2+) as cofactor.

The protein resides in the cytoplasm. The catalysed reaction is DNA(n) + a 2'-deoxyribonucleoside 5'-triphosphate = DNA(n+1) + diphosphate. Functionally, poorly processive, error-prone DNA polymerase involved in untargeted mutagenesis. Copies undamaged DNA at stalled replication forks, which arise in vivo from mismatched or misaligned primer ends. These misaligned primers can be extended by PolIV. Exhibits no 3'-5' exonuclease (proofreading) activity. May be involved in translesional synthesis, in conjunction with the beta clamp from PolIII. In Brucella melitensis biotype 1 (strain ATCC 23456 / CCUG 17765 / NCTC 10094 / 16M), this protein is DNA polymerase IV.